An 86-amino-acid chain; its full sequence is MVDLLAKVDYRIVIVAFIVALIIAIVVWTIAYIEYRKLLRQRRIDRLIKRTRERAEDSGNESDGDTEELSTMVDMGNLRLLDVNDL.

Residues 1–12 (MVDLLAKVDYRI) lie on the Extracellular side of the membrane. Residues 13–33 (VIVAFIVALIIAIVVWTIAYI) traverse the membrane as a helical segment. At 34–86 (EYRKLLRQRRIDRLIKRTRERAEDSGNESDGDTEELSTMVDMGNLRLLDVNDL) the chain is on the cytoplasmic side. The disordered stretch occupies residues 52–71 (RERAEDSGNESDGDTEELST). Residues S58 and S62 each carry the phosphoserine; by host CK2 modification. Over residues 58 to 68 (SGNESDGDTEE) the composition is skewed to acidic residues.

Belongs to the HIV-1 VPU protein family. Homopentamer. Interacts with host CD4 and BRTC; these interactions induce proteasomal degradation of CD4. Interacts with host BST2; this interaction leads to the degradation of host BST2. Interacts with host FBXW11. Interacts with host AP1M1; this interaction plays a role in the mistrafficking and subsequent degradation of host BST2. Interacts with host RANBP2; this interaction allows Vpu to down-regulate host BLM sumoylation. Post-translationally, phosphorylated by host CK2. This phosphorylation is necessary for interaction with human BTRC and degradation of CD4.

Its subcellular location is the host membrane. Its activity is regulated as follows. Ion channel activity is inhibited by hexamethylene amiloride in vitro. Functionally, enhances virion budding by targeting host CD4 and Tetherin/BST2 to proteasome degradation. Degradation of CD4 prevents any unwanted premature interactions between viral Env and its host receptor CD4 in the endoplasmic reticulum. Degradation of antiretroviral protein Tetherin/BST2 is important for virion budding, as BST2 tethers new viral particles to the host cell membrane. Mechanistically, Vpu bridges either CD4 or BST2 to BTRC, a substrate recognition subunit of the Skp1/Cullin/F-box protein E3 ubiquitin ligase, induces their ubiquitination and subsequent proteasomal degradation. The alteration of the E3 ligase specificity by Vpu seems to promote the degradation of host IKBKB, leading to NF-kappa-B down-regulation and subsequent apoptosis. Acts as a viroporin that forms an oligomeric ion channel in membranes. Modulates the host DNA repair mechanisms to promote degradation of nuclear viral cDNA in cells that are already productively infected in order to suppress immune sensing and proviral hyper-integration (superinfection). Manipulates PML-NBs and modulates SUMOylation of host BLM protein thereby enhancing its DNA-end processing activity toward viral unintegrated linear DNA. Also inhibits RAD52-mediated homologous repair of viral cDNA, preventing the generation of dead-end circular forms of single copies of the long terminal repeat and permitting sustained nucleolytic attack. In Homo sapiens (Human), this protein is Protein Vpu.